The sequence spans 337 residues: Dehydrogenase FUB6 (337 aa).

This sequence belongs to the zinc-containing alcohol dehydrogenase family. Quinone oxidoreductase subfamily.

It functions in the pathway mycotoxin biosynthesis. Dehydrogenase; part of the gene cluster that mediates the biosynthesis of fusaric acid, a mycotoxin with low to moderate toxicity to animals and humans, but with high phytotoxic properties. L-aspartate is suggested as fusaric acid amino acid precursor that is activated and further processed to O-acetyl-L-homoserine by cluster enzymes aspartate kinase FUB3 and homoserine O-acetyltransferase FUB5, as well as enzymes of the primary metabolism. The polyketide synthase (PKS) FUB1 generates the triketide trans-2-hexenal which is presumptively released by the hydrolase FUB4 and linked to the NRPS-bound amino acid precursor by NAD(P)-dependent dehydrogenase FUB6. FUB1, FUB4, and the non-canonical NRPS Fub8 may form an enzyme complex. Further processing of the NRPS-bound intermediate might be carried out by FUB6 and the O-acetylhomoserine FUB7, enabling a spontaneous electrocyclization to close the carbon backbone of fusaric acid. Dihydrofusaric acid is likely to be released via reduction by the thioester reductase (TR) domain of FUB8 whereupon the final oxidation to fusaric acid may (also) be performed by the FMN-dependent dehydrogenase FUB9. The sequence is that of Dehydrogenase FUB6 from Gibberella fujikuroi (strain CBS 195.34 / IMI 58289 / NRRL A-6831) (Bakanae and foot rot disease fungus).